The primary structure comprises 1199 residues: DNA-directed RNA polymerase subunit beta (1199 aa).

The segment at glutamate 1175–lysine 1199 is disordered. Residues aspartate 1188–lysine 1199 are compositionally biased toward polar residues.

It belongs to the RNA polymerase beta chain family. As to quaternary structure, the RNAP catalytic core consists of 2 alpha, 1 beta, 1 beta' and 1 omega subunit. When a sigma factor is associated with the core the holoenzyme is formed, which can initiate transcription.

It catalyses the reaction RNA(n) + a ribonucleoside 5'-triphosphate = RNA(n+1) + diphosphate. In terms of biological role, DNA-dependent RNA polymerase catalyzes the transcription of DNA into RNA using the four ribonucleoside triphosphates as substrates. The polypeptide is DNA-directed RNA polymerase subunit beta (Lacticaseibacillus casei (strain BL23) (Lactobacillus casei)).